A 371-amino-acid polypeptide reads, in one-letter code: Cytochrome b (371 aa).

4 consecutive transmembrane segments (helical) span residues 25–45 (FGSM…FLAI), 69–90 (WIMQ…YIHI), 105–125 (WLSG…GYVL), and 170–190 (FCAL…IHII). Heme b is bound by residues His-75 and His-89. His-174 and His-188 together coordinate heme b. His-193 lines the a ubiquinone pocket. 4 helical membrane-spanning segments follow: residues 218-238 (YKDF…LSVS), 280-300 (LGGT…PFTH), 312-332 (LSQT…WTAT), and 339-358 (FITI…IMNP).

Belongs to the cytochrome b family. In terms of assembly, the cytochrome bc1 complex contains 3 respiratory subunits (MT-CYB, CYC1 and UQCRFS1), 2 core proteins (UQCRC1 and UQCRC2) and probably 6 low-molecular weight proteins. Heme b is required as a cofactor.

The protein resides in the mitochondrion inner membrane. Functionally, component of the ubiquinol-cytochrome c reductase complex (complex III or cytochrome b-c1 complex) that is part of the mitochondrial respiratory chain. The b-c1 complex mediates electron transfer from ubiquinol to cytochrome c. Contributes to the generation of a proton gradient across the mitochondrial membrane that is then used for ATP synthesis. The polypeptide is Cytochrome b (MT-CYB) (Micrurus tener microgalbineus (Spotted coral snake)).